Here is a 138-residue protein sequence, read N- to C-terminus: Putative phosphatidylinositol 3,4,5-trisphosphate 3-phosphatase TPTE2P1 (138 aa).

Positions 1-75 constitute a C2 tensin-type domain; sequence MPAAFPCVFP…FAVEILFGMV (75 aa).

This is Putative phosphatidylinositol 3,4,5-trisphosphate 3-phosphatase TPTE2P1 (TPTE2P1) from Homo sapiens (Human).